The following is a 66-amino-acid chain: MERMDIIIWLLAVVIVLTTLMIFLHLKTLKIIRLLFPISKELSKKSCVFPWKKKWTKNYPPSSMYP.

Residues 8-24 traverse the membrane as a helical segment; the sequence is IWLLAVVIVLTTLMIFL. The residue at position 54 (Lys-54) is an N6-acetyllysine; alternate. At Lys-54 the chain carries N6-succinyllysine; alternate. Lys-57 carries the post-translational modification N6-acetyllysine.

Belongs to the ATPase protein 8 family. As to quaternary structure, component of the ATP synthase complex composed at least of ATP5F1A/subunit alpha, ATP5F1B/subunit beta, ATP5MC1/subunit c (homooctomer), MT-ATP6/subunit a, MT-ATP8/subunit 8, ATP5ME/subunit e, ATP5MF/subunit f, ATP5MG/subunit g, ATP5MK/subunit k, ATP5MJ/subunit j, ATP5F1C/subunit gamma, ATP5F1D/subunit delta, ATP5F1E/subunit epsilon, ATP5PF/subunit F6, ATP5PB/subunit b, ATP5PD/subunit d, ATP5PO/subunit OSCP. ATP synthase complex consists of a soluble F(1) head domain (subunits alpha(3) and beta(3)) - the catalytic core - and a membrane F(0) domain - the membrane proton channel (subunits c, a, 8, e, f, g, k and j). These two domains are linked by a central stalk (subunits gamma, delta, and epsilon) rotating inside the F1 region and a stationary peripheral stalk (subunits F6, b, d, and OSCP). Interacts with PRICKLE3.

The protein localises to the mitochondrion membrane. In terms of biological role, subunit 8, of the mitochondrial membrane ATP synthase complex (F(1)F(0) ATP synthase or Complex V) that produces ATP from ADP in the presence of a proton gradient across the membrane which is generated by electron transport complexes of the respiratory chain. ATP synthase complex consist of a soluble F(1) head domain - the catalytic core - and a membrane F(1) domain - the membrane proton channel. These two domains are linked by a central stalk rotating inside the F(1) region and a stationary peripheral stalk. During catalysis, ATP synthesis in the catalytic domain of F(1) is coupled via a rotary mechanism of the central stalk subunits to proton translocation. In vivo, can only synthesize ATP although its ATP hydrolase activity can be activated artificially in vitro. Part of the complex F(0) domain. This Loxodonta africana (African elephant) protein is ATP synthase F(0) complex subunit 8.